The sequence spans 158 residues: Endoribonuclease YbeY (158 aa).

Zn(2+) is bound by residues His119, His123, and His129.

The protein belongs to the endoribonuclease YbeY family. Zn(2+) is required as a cofactor.

Its subcellular location is the cytoplasm. Single strand-specific metallo-endoribonuclease involved in late-stage 70S ribosome quality control and in maturation of the 3' terminus of the 16S rRNA. This Shewanella woodyi (strain ATCC 51908 / MS32) protein is Endoribonuclease YbeY.